We begin with the raw amino-acid sequence, 98 residues long: uncharacterized protein (98 aa).

The span at 1–10 shows a compositional bias: basic residues; that stretch reads MARRRKPLHR. The segment at 1-21 is disordered; the sequence is MARRRKPLHRQRPEPPSWALR.

This is an uncharacterized protein from Mycobacterium bovis (strain ATCC BAA-935 / AF2122/97).